The primary structure comprises 496 residues: Cyclin-dependent kinase 16 (496 aa).

The segment at 1–97 (MDRMKKIKRQ…TSSDEVQSPV (97 aa)) is disordered. Ser-12 carries the phosphoserine; by BRSK2 modification. 7 positions are modified to phosphoserine: Ser-36, Ser-42, Ser-64, Ser-65, Ser-78, Ser-82, and Ser-89. Residues 69–78 (IVHEDLKMGS) show a composition bias toward basic and acidic residues. A compositionally biased stretch (polar residues) spans 83–93 (DQASATSSDEV). At Ser-95 the chain carries Phosphoserine; by CDK5. Ser-110, Ser-119, Ser-138, Ser-146, Ser-153, and Ser-155 each carry phosphoserine. Residues 165-446 (YIKLDKLGEG…AEDAMKHPFF (282 aa)) enclose the Protein kinase domain. Residues 171 to 179 (LGEGTYATV) and Lys-194 contribute to the ATP site. Position 175 is a phosphothreonine (Thr-175). Catalysis depends on Asp-286, which acts as the Proton acceptor. At Thr-380 the chain carries Phosphothreonine. 3 positions are modified to phosphoserine: Ser-391, Ser-478, and Ser-480.

This sequence belongs to the protein kinase superfamily. CMGC Ser/Thr protein kinase family. CDC2/CDKX subfamily. Found in a complex containing CABLES1, CDK17 and TDRD7. Interacts with BRSK2. Identified in a complex with NSF, syntaxin-1, synaptotagmin, SYN1, SYP and CDK5R1. Interacts with YWHAH, YWHAQ and YWHAZ. Interacts with CCNY; this interaction increases the CDK16 kinase activity. Interacts with CCNYL1; this interaction mutually increases the stability of CDK16 and CCNYL1 and increases the kinase activity of CDK16. Interacts with NSF. In terms of processing, phosphorylation of CDK16 is essential for the binding of CCNY, but also essential for the regulation of CDK16 kinase activity. Phosphorylation of CDK16 is essential for the binding of CCNYl1, but also essential for the regulation of CDK16 kinase activity. Ser-146 and Ser-153 are the most critical sites for the binding of CCNYL1 and for modulating CDK16 kinase activity. Phosphorylation at Ser-153 inhibits kinase activity. Detected in pancreas islets (at protein level). Detected in brain and pancreas.

The protein localises to the cytoplasm. Its subcellular location is the cytoplasmic vesicle. The protein resides in the secretory vesicle. It is found in the cell membrane. It localises to the synapse. The protein localises to the synaptosome. The enzyme catalyses L-seryl-[protein] + ATP = O-phospho-L-seryl-[protein] + ADP + H(+). It carries out the reaction L-threonyl-[protein] + ATP = O-phospho-L-threonyl-[protein] + ADP + H(+). Protein kinase that plays a role in vesicle-mediated transport processes and exocytosis. Regulates GH1 release by brain neurons. Phosphorylates NSF, and thereby regulates NSF oligomerization. Required for normal spermatogenesis. Regulates neuron differentiation and dendrite development. Plays a role in the regulation of insulin secretion in response to changes in blood glucose levels. Can phosphorylate CCNY at 'Ser-336' (in vitro). This chain is Cyclin-dependent kinase 16 (CDK16), found in Homo sapiens (Human).